The primary structure comprises 302 residues: Glycine--tRNA ligase alpha subunit (302 aa).

It belongs to the class-II aminoacyl-tRNA synthetase family. Tetramer of two alpha and two beta subunits.

Its subcellular location is the cytoplasm. It carries out the reaction tRNA(Gly) + glycine + ATP = glycyl-tRNA(Gly) + AMP + diphosphate. This is Glycine--tRNA ligase alpha subunit from Edwardsiella ictaluri (strain 93-146).